We begin with the raw amino-acid sequence, 308 residues long: MERLQRIFGAGGGLGHASPDSPTLDTSEQVYISSLALLKMLKHGRAGVPMEVMGLMLGEFVDEYTVRVVDVFAMPQSGTGVSVEAVDHVFQTNMLDMLKQTGRPEMVVGWYHSHPGFGCWLSGVDINTQQSFEALNQRAVAVVVDPIQSVKGKVVIDAFRSINPQTIMLGQEPRQTTSNLGHLNKPSIQALIHGLNRHYYSIAINYRKNELEEKMLLNLHKKKWTDGLTLRRFDTHSKTNEQTVQEMLSLAAKYNKAVQEEDELSPEKLAIVNVGRQDAKKHLEEHVSNLMSSNIVQTLGTMLDTVVF.

The 136-residue stretch at 30 to 165 (VYISSLALLK…IDAFRSINPQ (136 aa)) folds into the MPN domain. Zn(2+)-binding residues include His-112, His-114, and Asp-125. Residues 112-125 (HSHPGFGCWLSGVD) carry the JAMM motif motif. Lys-238 participates in a covalent cross-link: Glycyl lysine isopeptide (Lys-Gly) (interchain with G-Cter in ubiquitin).

This sequence belongs to the peptidase M67A family. PSMD14 subfamily. Component of the 19S regulatory particle (RP/PA700) lid subcomplex of the 26S proteasome. The 26S proteasome is composed of a core protease (CP), known as the 20S proteasome, capped at one or both ends by the 19S regulatory particle (RP/PA700). The RP/PA700 complex is composed of at least 17 different subunits in two subcomplexes, the base and the lid, which form the portions proximal and distal to the 20S proteolytic core, respectively. Ubiquitous with highest expression in flowers.

Its function is as follows. Metalloprotease component of the 26S proteasome that specifically cleaves 'Lys-63'-linked polyubiquitin chains. The 26S proteasome is involved in the ATP-dependent degradation of ubiquitinated proteins. The function of the 'Lys-63'-specific deubiquitination of the proteasome is unclear. The chain is 26S proteasome non-ATPase regulatory subunit 14 homolog (RPN11) from Arabidopsis thaliana (Mouse-ear cress).